We begin with the raw amino-acid sequence, 508 residues long: O-acetyltransferase pigM (508 aa).

Residues 166–188 (TPAPDERGKISPSLEDAAGSPRT) form a disordered region.

It participates in secondary metabolite biosynthesis. In terms of biological role, O-acetyltransferase; part of the gene cluster that mediates the biosynthesis of azaphilone pigments (MonAzPs), a complex mixture of compounds with a common azaphilone skeleton very widely used as food colorants. PigM and pigO are involved in the elimination of the omega-1 alcohol with pigM acting as an O-acetyltransferase that synthesizes the O-11 acetyl intermediate whereas pigO eliminates acetic acid to yield an intermediate with a C10(11) double bond. The first step of the pathway is performed by the nrPKS pigA that forms the hexaketide precursor from successive condensations of five malonyl-CoA units, with a simple acetyl-CoA starter unit. The role of esterase pigG is not clear, but it may play at most a supplementary role in the formation of the benzaldehyde produced by the pigA nrPKS. This very reactive benzaldehyde is intercepted by the pigC ketoreductase that to provide the first stable enzyme-free MonAzPs intermediate, 6-(4-hydroxy-2-oxopentyl)-3-methyl-2,4-dioxocyclohexane carbaldehyde, also known as M7PKS-1. The FAD-dependent monooxygenase pigN hydroxylates M7PKS-1 at C-4, which triggers the formation of the pyran ring. PigJ, pigK and pigD are involved in the acetylation of the pyran ring. PigJ and pigK form the two subunits of a dedicated fungal FAS that produces the side chain fatty acyl moiety of MonAzPs and pigD transfers the fatty acyl chain to the C-4 alcohol. PigM and pigO are involved in the elimination of the omega-1 alcohol. PigM acts as an O-acetyltransferase that synthesizes the putative O-11 acetyl intermediate whereas pigO eliminates acetic acid to yield an intermediate with a C10(11) double bond. The dehydration of the C-11 alcohol followed by the reduction of the C6(7) double bond by the NAD(P)H-dependent oxidoreductase pigE increases the electrophilicity of the C-5 ketone of the resulting acyl benzopyran. This in turn sets up the C-5 ketone for an intramolecular Knoevenagel aldol condensation with the C-20 enol of the side chain. This condensation affords the characteristic linear tricyclic carbon skeletons of the yellow pigments that serve as the common precursors for the classical yellow pigments monascin and ankaflavin, orange pigments rubopunctatin and monascorubrin, and red pigments ribropunctamine and monascorubramine. The FAD-dependent oxidoreductase pigF is especially invoved in the biosynthesis of orange and red pigments via desaturation of C6(7). The protein is O-acetyltransferase pigM of Monascus ruber (Mold).